A 194-amino-acid polypeptide reads, in one-letter code: Leucyl/phenylalanyl-tRNA--protein transferase (194 aa).

The protein belongs to the L/F-transferase family.

The protein localises to the cytoplasm. It carries out the reaction N-terminal L-lysyl-[protein] + L-leucyl-tRNA(Leu) = N-terminal L-leucyl-L-lysyl-[protein] + tRNA(Leu) + H(+). The catalysed reaction is N-terminal L-arginyl-[protein] + L-leucyl-tRNA(Leu) = N-terminal L-leucyl-L-arginyl-[protein] + tRNA(Leu) + H(+). It catalyses the reaction L-phenylalanyl-tRNA(Phe) + an N-terminal L-alpha-aminoacyl-[protein] = an N-terminal L-phenylalanyl-L-alpha-aminoacyl-[protein] + tRNA(Phe). Functionally, functions in the N-end rule pathway of protein degradation where it conjugates Leu, Phe and, less efficiently, Met from aminoacyl-tRNAs to the N-termini of proteins containing an N-terminal arginine or lysine. This is Leucyl/phenylalanyl-tRNA--protein transferase from Chlorobium luteolum (strain DSM 273 / BCRC 81028 / 2530) (Pelodictyon luteolum).